Consider the following 616-residue polypeptide: Putative L-type lectin-domain containing receptor kinase I.10 (616 aa).

A signal peptide spans 1 to 22 (MAWGLFQILMISFFHLIKLSSQ). Topologically, residues 23-288 (QETSFVYETF…RAEHKNLSPL (266 aa)) are extracellular. Residues 24-258 (ETSFVYETFR…YQYVLSWSFS (235 aa)) form a legume-lectin like region. 5 N-linked (GlcNAc...) asparagine glycosylation sites follow: N56, N124, N181, N204, and N225. The helical transmembrane segment at 289–309 (FIDLLGFLAIMGLCTLTGMYF) threads the bilayer. Residues 310-616 (FKRGKYAEIT…SAASSATNSP (307 aa)) are Cytoplasmic-facing. In terms of domain architecture, Protein kinase spans 343 to 616 (FHKDGFLGKG…SAASSATNSP (274 aa)). ATP is bound by residues 349–357 (LGKGGFGEV) and K371. Residue D467 is the Proton acceptor of the active site.

In the C-terminal section; belongs to the protein kinase superfamily. Ser/Thr protein kinase family. It in the N-terminal section; belongs to the leguminous lectin family.

The protein localises to the cell membrane. It carries out the reaction L-seryl-[protein] + ATP = O-phospho-L-seryl-[protein] + ADP + H(+). The catalysed reaction is L-threonyl-[protein] + ATP = O-phospho-L-threonyl-[protein] + ADP + H(+). This Arabidopsis thaliana (Mouse-ear cress) protein is Putative L-type lectin-domain containing receptor kinase I.10 (LECRK110).